A 567-amino-acid polypeptide reads, in one-letter code: MELKAQATSILKEAILKVGFEVEDSELQFETSSHADLASRVAFRLASIHKQNPKELASRIVSAIEIPEGSYIGEVSAAGPYINFLAGRHYMDETVTAVREEKEKFGCGAPKDRILLEHTSANPNGPLHVGHIRNSIIGDTLARILRRAGYDVEVQYYVNDMGRQIAVVSWACERFELDLSRKSDAAIADVYIKANVELDKNPDYVKKIDALMEKVEVGDLQTIERFDKAVSLAIAGIKETLLRLNVVHDKFVNESRFLKSGEVHDIVERIKATGRTETDKGALVVDLSDYGFEKTLVIQRSNGTSLYTTRDLAYHEWKAGQADRIIDVFGADHKLISGQLRATLNAIGIKEPEVVIFEFVSLPEGSMSTRRGQFISADDLFDRVTEAAFEQVESRRPETSTEFKKQVAEMVGIGAVRYDIVRVSPEKSTVFNWKEALDFEKQGAPYIQYSHARACSILEKAKDEAAWDPAEEITPSLLVEDSEIDLIKKMAMFDSIIDLGARELKPHVLAIYARELADSFNQFYRFVPVIAAEDEKVRASRLALVDCARIVLANSLDTLGIGAPESM.

The 'HIGH' region signature appears at 121–131 (ANPNGPLHVGH).

This sequence belongs to the class-I aminoacyl-tRNA synthetase family.

Its subcellular location is the cytoplasm. It catalyses the reaction tRNA(Arg) + L-arginine + ATP = L-arginyl-tRNA(Arg) + AMP + diphosphate. The polypeptide is Arginine--tRNA ligase (Methanosarcina acetivorans (strain ATCC 35395 / DSM 2834 / JCM 12185 / C2A)).